The primary structure comprises 312 residues: Ribosomal protein L11 methyltransferase (312 aa).

4 residues coordinate S-adenosyl-L-methionine: T160, G181, D203, and N248.

Belongs to the methyltransferase superfamily. PrmA family.

The protein localises to the cytoplasm. It catalyses the reaction L-lysyl-[protein] + 3 S-adenosyl-L-methionine = N(6),N(6),N(6)-trimethyl-L-lysyl-[protein] + 3 S-adenosyl-L-homocysteine + 3 H(+). Methylates ribosomal protein L11. The polypeptide is Ribosomal protein L11 methyltransferase (Fusobacterium nucleatum subsp. nucleatum (strain ATCC 25586 / DSM 15643 / BCRC 10681 / CIP 101130 / JCM 8532 / KCTC 2640 / LMG 13131 / VPI 4355)).